Consider the following 365-residue polypeptide: Peptide chain release factor 2 (365 aa).

Gln-252 carries the N5-methylglutamine modification.

This sequence belongs to the prokaryotic/mitochondrial release factor family. Post-translationally, methylated by PrmC. Methylation increases the termination efficiency of RF2.

The protein localises to the cytoplasm. Its function is as follows. Peptide chain release factor 2 directs the termination of translation in response to the peptide chain termination codons UGA and UAA. In Escherichia coli (strain K12 / MC4100 / BW2952), this protein is Peptide chain release factor 2.